The sequence spans 228 residues: 7-cyano-7-deazaguanine synthase (228 aa).

13–23 (LSGGMDSTLSS) provides a ligand contact to ATP. Residues cysteine 192, cysteine 200, cysteine 203, and cysteine 206 each coordinate Zn(2+).

This sequence belongs to the QueC family. Zn(2+) is required as a cofactor.

It carries out the reaction 7-carboxy-7-deazaguanine + NH4(+) + ATP = 7-cyano-7-deazaguanine + ADP + phosphate + H2O + H(+). The protein operates within purine metabolism; 7-cyano-7-deazaguanine biosynthesis. Functionally, catalyzes the ATP-dependent conversion of 7-carboxy-7-deazaguanine (CDG) to 7-cyano-7-deazaguanine (preQ(0)). This Aliarcobacter butzleri (strain RM4018) (Arcobacter butzleri) protein is 7-cyano-7-deazaguanine synthase.